A 289-amino-acid chain; its full sequence is Energy-coupling factor transporter ATP-binding protein EcfA2 (289 aa).

The 245-residue stretch at 7–251 (IILDNVSYTY…IELLTKIEID (245 aa)) folds into the ABC transporter domain. 44 to 51 (GTTGSGKS) provides a ligand contact to ATP.

It belongs to the ABC transporter superfamily. Energy-coupling factor EcfA family. In terms of assembly, forms a stable energy-coupling factor (ECF) transporter complex composed of 2 membrane-embedded substrate-binding proteins (S component), 2 ATP-binding proteins (A component) and 2 transmembrane proteins (T component).

The protein resides in the cell membrane. Its function is as follows. ATP-binding (A) component of a common energy-coupling factor (ECF) ABC-transporter complex. Unlike classic ABC transporters this ECF transporter provides the energy necessary to transport a number of different substrates. The protein is Energy-coupling factor transporter ATP-binding protein EcfA2 of Mycoplasma capricolum subsp. capricolum (strain California kid / ATCC 27343 / NCTC 10154).